A 375-amino-acid polypeptide reads, in one-letter code: Probable Na(+)/H(+) antiporter GerT (375 aa).

Helical transmembrane passes span 27 to 47 (PSVL…LGII), 89 to 109 (AGGI…FGLI), 112 to 132 (HAIF…VQTL), 145 to 165 (TILG…AFVM), 183 to 203 (IIFF…IMKM), 204 to 224 (LVPL…CFSF), 226 to 246 (YYSE…GIAI), 261 to 281 (PIAY…EITF), 288 to 308 (LWFI…GSGL), and 350 to 370 (ENFT…PPLL).

This sequence belongs to the monovalent cation:proton antiporter 2 (CPA2) transporter (TC 2.A.37) family.

It localises to the membrane. In terms of biological role, contributes to the success of spore outgrowth from the germinated state during alkaline or Na(+) stress. Does not have a significant role in germination. In Bacillus cereus, this protein is Probable Na(+)/H(+) antiporter GerT (gerT).